Consider the following 396-residue polypeptide: Chaperone protein DnaJ 1 (396 aa).

One can recognise a J domain in the interval 10-75 (DYYKVLGVPK…KKRKEYDEAR (66 aa)). Over residues 127–137 (LFNRGGAGPGT) the composition is skewed to gly residues. Positions 127–149 (LFNRGGAGPGTGTRTQPRRGQDI) are disordered. The CR-type zinc finger occupies 163–241 (GATVPLRMSS…CKGSGRAKSS (79 aa)). Zn(2+)-binding residues include cysteine 176, cysteine 179, cysteine 192, cysteine 195, cysteine 215, cysteine 218, cysteine 229, and cysteine 232. 4 CXXCXGXG motif repeats span residues 176–183 (CKACSGTG), 192–199 (CPTCVGTG), 215–222 (CPDCKGRG), and 229–236 (CEICKGSG).

It belongs to the DnaJ family. In terms of assembly, homodimer. Zn(2+) serves as cofactor.

Its subcellular location is the cytoplasm. Functionally, participates actively in the response to hyperosmotic and heat shock by preventing the aggregation of stress-denatured proteins and by disaggregating proteins, also in an autonomous, DnaK-independent fashion. Unfolded proteins bind initially to DnaJ; upon interaction with the DnaJ-bound protein, DnaK hydrolyzes its bound ATP, resulting in the formation of a stable complex. GrpE releases ADP from DnaK; ATP binding to DnaK triggers the release of the substrate protein, thus completing the reaction cycle. Several rounds of ATP-dependent interactions between DnaJ, DnaK and GrpE are required for fully efficient folding. Also involved, together with DnaK and GrpE, in the DNA replication of plasmids through activation of initiation proteins. The protein is Chaperone protein DnaJ 1 of Streptomyces avermitilis (strain ATCC 31267 / DSM 46492 / JCM 5070 / NBRC 14893 / NCIMB 12804 / NRRL 8165 / MA-4680).